We begin with the raw amino-acid sequence, 356 residues long: UDP-N-acetylglucosamine--N-acetylmuramyl-(pentapeptide) pyrophosphoryl-undecaprenol N-acetylglucosamine transferase (356 aa).

Residues 14 to 16 (TGG), N126, R162, S190, I244, and Q289 contribute to the UDP-N-acetyl-alpha-D-glucosamine site.

Belongs to the glycosyltransferase 28 family. MurG subfamily.

It localises to the cell inner membrane. It carries out the reaction di-trans,octa-cis-undecaprenyl diphospho-N-acetyl-alpha-D-muramoyl-L-alanyl-D-glutamyl-meso-2,6-diaminopimeloyl-D-alanyl-D-alanine + UDP-N-acetyl-alpha-D-glucosamine = di-trans,octa-cis-undecaprenyl diphospho-[N-acetyl-alpha-D-glucosaminyl-(1-&gt;4)]-N-acetyl-alpha-D-muramoyl-L-alanyl-D-glutamyl-meso-2,6-diaminopimeloyl-D-alanyl-D-alanine + UDP + H(+). It participates in cell wall biogenesis; peptidoglycan biosynthesis. Functionally, cell wall formation. Catalyzes the transfer of a GlcNAc subunit on undecaprenyl-pyrophosphoryl-MurNAc-pentapeptide (lipid intermediate I) to form undecaprenyl-pyrophosphoryl-MurNAc-(pentapeptide)GlcNAc (lipid intermediate II). This Cupriavidus pinatubonensis (strain JMP 134 / LMG 1197) (Cupriavidus necator (strain JMP 134)) protein is UDP-N-acetylglucosamine--N-acetylmuramyl-(pentapeptide) pyrophosphoryl-undecaprenol N-acetylglucosamine transferase.